A 441-amino-acid polypeptide reads, in one-letter code: Homogentisate 1,2-dioxygenase (441 aa).

His287 (proton acceptor) is an active-site residue. Fe cation-binding residues include His330 and Glu336. The homogentisate site is built by Tyr345 and His366. Residue His366 participates in Fe cation binding.

It belongs to the homogentisate dioxygenase family. As to quaternary structure, hexamer; dimer of trimers. The cofactor is Fe cation.

It carries out the reaction homogentisate + O2 = 4-maleylacetoacetate + H(+). It participates in amino-acid degradation; L-phenylalanine degradation; acetoacetate and fumarate from L-phenylalanine: step 4/6. Involved in the catabolism of homogentisate (2,5-dihydroxyphenylacetate or 2,5-OH-PhAc), a central intermediate in the degradation of phenylalanine and tyrosine. Catalyzes the oxidative ring cleavage of the aromatic ring of homogentisate to yield maleylacetoacetate. This chain is Homogentisate 1,2-dioxygenase, found in Xanthomonas oryzae pv. oryzae (strain MAFF 311018).